A 465-amino-acid chain; its full sequence is Alpha-2A adrenergic receptor (465 aa).

Residues 1 to 48 (MFRQEQPLAEGSFAPMGSLQPEAGNASWNGTEAPGGGARATPYSLQVT) are Extracellular-facing. 2 N-linked (GlcNAc...) asparagine glycosylation sites follow: Asn-25 and Asn-29. Residues 49–74 (LTLVCLAGLLMLFTVFGNVLVIIAVF) form a helical membrane-spanning segment. At 75-85 (TSRALKAPQNL) the chain is on the cytoplasmic side. A helical membrane pass occupies residues 86–111 (FLVSLASADILVATLVIPFSLANEVM). Topologically, residues 112 to 121 (GYWYFGKAWC) are extracellular. Cys-121 and Cys-203 are oxidised to a cystine. A helical transmembrane segment spans residues 122 to 144 (EIYLALDVLFCTSSIVHLCAISL). The Cytoplasmic segment spans residues 145–164 (DRYWSITQAIEYNLKRTPRR). Residues 165-188 (IKAIIVTVWVISAVISFPPLISIE) traverse the membrane as a helical segment. At 189–207 (KKAGGGGQQPAEPRCEIND) the chain is on the extracellular side. The helical transmembrane segment at 208-232 (QKWYVISSCIGSFFAPCLIMILVYV) threads the bilayer. At 233 to 389 (RIYQIAKRRT…RQNREKRFTF (157 aa)) the chain is on the cytoplasmic side. A disordered region spans residues 242–377 (TRVPPSRRGP…RGGVAKASRW (136 aa)). Residues 313-330 (SSEHAERPPGPRRSERGP) are compositionally biased toward basic and acidic residues. Ser-346 bears the Phosphoserine mark. At Arg-368 the chain carries Omega-N-methylarginine. The helical transmembrane segment at 390–414 (VLAVVIGVFVVCWFPFFFTYTLTAV) threads the bilayer. At 415-424 (GCSVPPTLFK) the chain is on the extracellular side. A helical membrane pass occupies residues 425 to 445 (FFFWFGYCNSSLNPVIYTIFN). Over 446–465 (HDFRRAFKKILCRGDRKRIV) the chain is Cytoplasmic. A lipid anchor (S-palmitoyl cysteine) is attached at Cys-457.

It belongs to the G-protein coupled receptor 1 family. Adrenergic receptor subfamily. ADRA2A sub-subfamily.

Its subcellular location is the cell membrane. Alpha-2 adrenergic receptors mediate the catecholamine-induced inhibition of adenylate cyclase through the action of G proteins. The polypeptide is Alpha-2A adrenergic receptor (Sus scrofa (Pig)).